The primary structure comprises 311 residues: Protoheme IX farnesyltransferase (311 aa).

9 consecutive transmembrane segments (helical) span residues 38-58 (IKVV…APDM), 62-82 (YFVQ…AAVI), 113-133 (LIFS…AANW), 134-154 (LTAQ…TMFL), 162-182 (IVIG…SETG), 188-208 (PWIL…ALAI), 230-250 (FTKT…FLPF), 251-271 (LIHM…IIFI), and 286-306 (ALNL…ALFA).

This sequence belongs to the UbiA prenyltransferase family. Protoheme IX farnesyltransferase subfamily.

The protein resides in the cell inner membrane. The enzyme catalyses heme b + (2E,6E)-farnesyl diphosphate + H2O = Fe(II)-heme o + diphosphate. It participates in porphyrin-containing compound metabolism; heme O biosynthesis; heme O from protoheme: step 1/1. Converts heme B (protoheme IX) to heme O by substitution of the vinyl group on carbon 2 of heme B porphyrin ring with a hydroxyethyl farnesyl side group. The protein is Protoheme IX farnesyltransferase of Psychromonas ingrahamii (strain DSM 17664 / CCUG 51855 / 37).